Consider the following 361-residue polypeptide: Chorismate synthase (361 aa).

The tract at residues 37-59 is disordered; sequence TEEDLQHDLDRRRPGTSRYTTPR. Basic and acidic residues predominate over residues 40-49; that stretch reads DLQHDLDRRR. Arg-48 and Arg-54 together coordinate NADP(+). FMN is bound by residues 125 to 127, 238 to 239, Gly-278, 293 to 297, and Arg-319; these read RSS, NA, and KPTSS.

This sequence belongs to the chorismate synthase family. In terms of assembly, homotetramer. It depends on FMNH2 as a cofactor.

It carries out the reaction 5-O-(1-carboxyvinyl)-3-phosphoshikimate = chorismate + phosphate. The protein operates within metabolic intermediate biosynthesis; chorismate biosynthesis; chorismate from D-erythrose 4-phosphate and phosphoenolpyruvate: step 7/7. Its function is as follows. Catalyzes the anti-1,4-elimination of the C-3 phosphate and the C-6 proR hydrogen from 5-enolpyruvylshikimate-3-phosphate (EPSP) to yield chorismate, which is the branch point compound that serves as the starting substrate for the three terminal pathways of aromatic amino acid biosynthesis. This reaction introduces a second double bond into the aromatic ring system. In Erwinia tasmaniensis (strain DSM 17950 / CFBP 7177 / CIP 109463 / NCPPB 4357 / Et1/99), this protein is Chorismate synthase.